Here is a 137-residue protein sequence, read N- to C-terminus: Protein phosphatase 1 regulatory subunit 1B (137 aa).

A disordered region spans residues 1–137 (DPKDRKKIQF…EEEEEEEDSQ (137 aa)). Residue threonine 33 is modified to Phosphothreonine; by PKA. A compositionally biased stretch (basic and acidic residues) spans 40-62 (LXEHSSPEEEASPHQRAAGEGHH). A phosphoserine mark is found at serine 44 and serine 45. Threonine 74 carries the post-translational modification Phosphothreonine; by CDK5. The span at 88 to 99 (HLQSISNLGENQ) shows a compositional bias: polar residues. A Phosphoserine modification is found at serine 101. Over residues 108 to 117 (GELRELGYPR) the composition is skewed to basic and acidic residues. The segment covering 118 to 137 (EEEEEEEEDDEEEEEEEDSQ) has biased composition (acidic residues). Position 136 is a phosphoserine (serine 136).

It belongs to the protein phosphatase inhibitor 1 family. Phosphorylation of Thr-33 is required for activity. In terms of processing, dopamine- and cyclic AMP-regulated neuronal phosphoprotein.

It localises to the cytoplasm. In terms of biological role, inhibitor of protein-phosphatase 1. The sequence is that of Protein phosphatase 1 regulatory subunit 1B (PPP1R1B) from Sus scrofa (Pig).